We begin with the raw amino-acid sequence, 2053 residues long: Cell adhesion molecule DSCAML1 (2053 aa).

The signal sequence occupies residues methionine 1–proline 18. Ig-like C2-type domains follow at residues glutamate 19–isoleucine 119, proline 115–serine 217, proline 226–threonine 310, proline 314–glutamine 396, proline 408–asparagine 501, proline 506–serine 586, proline 596–isoleucine 685, proline 690–threonine 784, and proline 788–glutamine 885. Residues glutamate 19–lysine 1591 lie on the Extracellular side of the membrane. Disulfide bonds link cysteine 47/cysteine 103, cysteine 146/cysteine 198, cysteine 247/cysteine 294, cysteine 336/cysteine 386, cysteine 429/cysteine 485, cysteine 526/cysteine 575, and cysteine 617/cysteine 669. Residue asparagine 79 is glycosylated (N-linked (GlcNAc...) asparagine). N-linked (GlcNAc...) asparagine glycosylation is found at asparagine 368 and asparagine 471. Asparagine 666 and asparagine 710 each carry an N-linked (GlcNAc...) asparagine glycan. A disulfide bridge connects residues cysteine 711 and cysteine 767. Asparagine 809 carries N-linked (GlcNAc...) asparagine glycosylation. Cysteine 810 and cysteine 867 are oxidised to a cystine. 4 Fibronectin type-III domains span residues proline 887–alanine 984, proline 989–aspartate 1088, proline 1093–aspartate 1189, and proline 1193–alanine 1288. N-linked (GlcNAc...) asparagine glycans are attached at residues asparagine 1144 and asparagine 1162. The Ig-like C2-type 10 domain occupies glutamate 1278 to asparagine 1377. Cysteine 1311 and cysteine 1363 are oxidised to a cystine. N-linked (GlcNAc...) asparagine glycosylation occurs at asparagine 1345. 2 consecutive Fibronectin type-III domains span residues proline 1383–arginine 1477 and glutamate 1478–proline 1578. Residue asparagine 1561 is glycosylated (N-linked (GlcNAc...) asparagine). A helical transmembrane segment spans residues leucine 1592–valine 1612. At arginine 1613 to valine 2053 the chain is on the cytoplasmic side. Disordered stretches follow at residues leucine 1716–arginine 1741, histidine 1773–serine 1803, serine 1840–serine 1862, and leucine 1974–valine 2053. Positions lysine 1732–arginine 1741 are enriched in basic residues. Polar residues predominate over residues histidine 1773–glutamine 1789. Over residues proline 1977–serine 1993 the composition is skewed to pro residues.

As to quaternary structure, homodimer; mediates homophilic interactions to promote cell adhesion. As to expression, in the retina, expressed in the rod photoreceptors, AII amacrine cells and rod bipolar cells (at protein level).

It localises to the cell membrane. It is found in the synapse. In terms of biological role, cell adhesion molecule that plays a role in neuronal self-avoidance. Promotes repulsion between specific neuronal processes of either the same cell or the same subtype of cells. Promotes both isoneuronal self-avoidance for creating an orderly neurite arborization in retinal rod bipolar cells and heteroneuronal self-avoidance to maintain mosaic spacing between AII amacrine cells. Adhesion molecule that promotes lamina-specific synaptic connections in the retina: expressed in specific subsets of interneurons and retinal ganglion cells (RGCs) and promotes synaptic connectivity via homophilic interactions. This Mus musculus (Mouse) protein is Cell adhesion molecule DSCAML1 (Dscaml1).